A 77-amino-acid polypeptide reads, in one-letter code: Conotoxin King-Kong 1 (77 aa).

The signal sequence occupies residues 1 to 22; sequence MKLTCMMIVAVLFLTAWTFATA. Positions 23–49 are excised as a propeptide; sequence DDSSNGLENLFSKAHHEMKNPEASKLN. 3 disulfides stabilise this stretch: cysteine 52-cysteine 67, cysteine 59-cysteine 71, and cysteine 66-cysteine 76. Methionine sulfoxide; partial is present on methionine 61.

This sequence belongs to the conotoxin O1 superfamily. Expressed by the venom duct.

The protein resides in the secreted. The protein is Conotoxin King-Kong 1 of Conus textile (Cloth-of-gold cone).